The primary structure comprises 164 residues: Lipoprotein signal peptidase (164 aa).

3 helical membrane passes run 12–32 (WLWL…LILQ), 70–90 (WFFA…MYRS), and 102–122 (ALII…GFVV). Residues Asp123 and Asp141 contribute to the active site. The helical transmembrane segment at 137–157 (FNLADTAICVGAALIVLEGFL) threads the bilayer.

Belongs to the peptidase A8 family.

The protein localises to the cell inner membrane. The enzyme catalyses Release of signal peptides from bacterial membrane prolipoproteins. Hydrolyzes -Xaa-Yaa-Zaa-|-(S,diacylglyceryl)Cys-, in which Xaa is hydrophobic (preferably Leu), and Yaa (Ala or Ser) and Zaa (Gly or Ala) have small, neutral side chains.. It participates in protein modification; lipoprotein biosynthesis (signal peptide cleavage). In terms of biological role, this protein specifically catalyzes the removal of signal peptides from prolipoproteins. The chain is Lipoprotein signal peptidase from Escherichia coli O157:H7.